The following is a 470-amino-acid chain: Uronate isomerase (470 aa).

It belongs to the metallo-dependent hydrolases superfamily. Uronate isomerase family.

It carries out the reaction D-glucuronate = D-fructuronate. The enzyme catalyses aldehydo-D-galacturonate = keto-D-tagaturonate. It participates in carbohydrate metabolism; pentose and glucuronate interconversion. The polypeptide is Uronate isomerase (Salmonella arizonae (strain ATCC BAA-731 / CDC346-86 / RSK2980)).